The following is a 404-amino-acid chain: Zinc finger CCCH domain-containing protein 15 homolog (404 aa).

Over residues 1 to 10 (MPPKKAPPGP) the composition is skewed to pro residues. The tract at residues 1-71 (MPPKKAPPGP…KRKEEKEKKL (71 aa)) is disordered. The segment covering 12-28 (KKTEQKKKEKVIEDKTF) has biased composition (basic and acidic residues). A compositionally biased stretch (low complexity) spans 38–50 (QQKFIQQVQKQVQ). A compositionally biased stretch (basic and acidic residues) spans 56–71 (PRQDGDKRKEEKEKKL). C3H1-type zinc fingers lie at residues 94–121 (DPKSVVCAFFKQGTCTKGDKCKFSHDLS) and 165–202 (PTTDIICKFFLEAVEKSKYGWFWECPNGGKCIYRHALP). Thr-218 is modified (phosphothreonine). Ser-221 is subject to Phosphoserine. Positions 246–270 (LAWKKRKIAEKKAKLAAEEERKKSD) form a coiled coil. Low complexity-rich tracts occupy residues 352–361 (EAAKTAAAED) and 369–380 (PSSSAPANDAAP). The disordered stretch occupies residues 352 to 380 (EAAKTAAAEDAAADEDGPSSSAPANDAAP).

The protein belongs to the ZC3H15/TMA46 family.

The chain is Zinc finger CCCH domain-containing protein 15 homolog from Drosophila melanogaster (Fruit fly).